A 93-amino-acid chain; its full sequence is Large ribosomal subunit protein uL23 (93 aa).

Belongs to the universal ribosomal protein uL23 family. As to quaternary structure, part of the 50S ribosomal subunit. Contacts protein L29, and trigger factor when it is bound to the ribosome.

In terms of biological role, one of the early assembly proteins it binds 23S rRNA. One of the proteins that surrounds the polypeptide exit tunnel on the outside of the ribosome. Forms the main docking site for trigger factor binding to the ribosome. The sequence is that of Large ribosomal subunit protein uL23 from Campylobacter hominis (strain ATCC BAA-381 / DSM 21671 / CCUG 45161 / LMG 19568 / NCTC 13146 / CH001A).